Consider the following 273-residue polypeptide: Undecaprenyl-diphosphatase (273 aa).

The next 7 membrane-spanning stretches (helical) occupy residues 13-35 (GLVEGFTEFLPISSTGHLIVFGN), 45-62 (VFEIAIQLGAVLAVVFEY), 82-102 (FVLNLAIAFIPAAVMGLLFDK), 108-128 (LFNPLSVAVMLVLGGFFILWV), 186-206 (TEFSFFLAVPMMVAATAYDVL), 219-239 (LILIGFIAAFVSGLVAVKALL), and 250-270 (FAYYRIVFGIVIIILWLSGWI).

The protein belongs to the UppP family.

The protein localises to the cell inner membrane. The catalysed reaction is di-trans,octa-cis-undecaprenyl diphosphate + H2O = di-trans,octa-cis-undecaprenyl phosphate + phosphate + H(+). Functionally, catalyzes the dephosphorylation of undecaprenyl diphosphate (UPP). Confers resistance to bacitracin. This Neisseria gonorrhoeae (strain NCCP11945) protein is Undecaprenyl-diphosphatase.